The primary structure comprises 270 residues: DNA adenine methylase (270 aa).

Tryptophan 10, lysine 14, aspartate 54, and aspartate 181 together coordinate S-adenosyl-L-methionine.

The protein belongs to the N(4)/N(6)-methyltransferase family.

The catalysed reaction is a 2'-deoxyadenosine in DNA + S-adenosyl-L-methionine = an N(6)-methyl-2'-deoxyadenosine in DNA + S-adenosyl-L-homocysteine + H(+). In terms of biological role, an alpha subtype methylase, recognizes the double-stranded sequence 5'-GATC-3' and methylates A-2. Overexpression leads to hypermutability. May be involved in methyl-directed DNA mismatch repair, initiation of chromosome replication and gene expression. This chain is DNA adenine methylase, found in Serratia marcescens.